The sequence spans 470 residues: Peripherin (470 aa).

The tract at residues 1 to 99 (MSHHPSGLRA…FLATRSNEKQ (99 aa)) is head. The residue at position 17 (Tyr-17) is a 3'-nitrotyrosine. Residues Ser-28, Ser-50, and Ser-59 each carry the phosphoserine modification. The region spanning 97–407 (EKQELQELND…KLLEGEESRI (311 aa)) is the IF rod domain. A coil 1A region spans residues 100–132 (ELQELNDRFANFIEKVRFLEQQNAALRGELSQA). Residues 133 to 143 (RGQEPARADQL) are linker 1. Positions 144 to 239 (CQQELRELRR…KLHEEELRDL (96 aa)) are coil 1B. A linker 2 region spans residues 240–262 (QVSVESQQVQQVEVEATVKPELT). Residues 263–405 (AALRDIRAQY…YRKLLEGEES (143 aa)) are coil 2. Tyr-379 carries the 3'-nitrotyrosine modification. The tract at residues 406 to 470 (RISVPVHSFA…ELDKSSAHSY (65 aa)) is tail. Residues 447-470 (NGEVVTESQKEQRSELDKSSAHSY) are disordered. Residues 454 to 470 (SQKEQRSELDKSSAHSY) show a composition bias toward basic and acidic residues. A Phosphotyrosine modification is found at Tyr-470.

The protein belongs to the intermediate filament family. In terms of assembly, forms homodimers (in vitro). Homopolymerizes into a filamentous network (in vitro). Forms heterodimers with NEFL, NEFM or NEFH (in vitro). Interacts with DST (via C-terminus). Interacts with RAB7A; the interaction is direct. Interacts with PRKCE (via phorbol-ester/DAG-type 2 domain). In terms of processing, phosphorylated; phosphorylation increases after nerve injury in regenerating neurons. Expressed in the neurons of the outer hair cells in the organ of Corti and to a lesser extent in type I spiral ganglion cells.

The protein resides in the cytoplasm. Its subcellular location is the cytoskeleton. It is found in the cell projection. It localises to the axon. The protein localises to the perikaryon. In terms of biological role, class-III neuronal intermediate filament protein. May form an independent structural network without the involvement of other neurofilaments or may cooperate with the neuronal intermediate filament proteins NEFL, NEFH, NEFM and INA to form a filamentous network. Assembly of the neuronal intermediate filaments may be regulated by RAB7A. Plays a role in the development of unmyelinated sensory neurons. May be involved in axon elongation and axon regeneration after injury. Inhibits neurite extension in type II spiral ganglion neurons in the cochlea. The sequence is that of Peripherin (PRPH) from Homo sapiens (Human).